A 29-amino-acid polypeptide reads, in one-letter code: Toxin TdII-3 (29 aa).

The 29-residue stretch at 1–29 (KDGYLVGTDGCKYGCFTRPGHFCANEECL) folds into the LCN-type CS-alpha/beta domain.

It belongs to the long (4 C-C) scorpion toxin superfamily. Sodium channel inhibitor family. Beta subfamily. Expressed by the venom gland.

It is found in the secreted. Its function is as follows. Binds voltage-independently to sodium channels (Nav) and shifts the voltage of activation toward more negative potentials. This toxin is active against mammals and also affects neuromuscular preparations of frog. The polypeptide is Toxin TdII-3 (Tityus discrepans (Venezuelan scorpion)).